Consider the following 1059-residue polypeptide: Kinesin-like protein KIN-7K, chloroplastic (1059 aa).

Composition is skewed to low complexity over residues 1–35 (MSSR…SAGS) and 43–58 (PRSY…SSHF). The N-terminal 48 residues, 1–48 (MSSRPSSSASSRRSSSPFSAGSRRPPTSSSSSAGSYLTGRLMPRSYST), are a transit peptide targeting the chloroplast. A disordered region spans residues 1–99 (MSSRPSSSAS…SPPSPVPFPS (99 aa)). The span at 59-69 (FGGGGGSGGGS) shows a compositional bias: gly residues. Positions 70 to 87 (RSTTPGRRGSSSSSLVGP) are enriched in low complexity. A compositionally biased stretch (pro residues) spans 88-97 (VPSPPSPVPF). The region spanning 114 to 431 (SISVTIRFRP…LKFASRAKRV (318 aa)) is the Kinesin motor domain. 194-201 (GVTSSGKT) provides a ligand contact to ATP. Positions 435 to 518 (AARNRMIDEK…IQRLTKLILV (84 aa)) form a coiled coil. The disordered stretch occupies residues 526-570 (ALTDTSSHQRHNSVNEEDKVSTSQDSSMLVQNDSATKDSLSSASP). Residues 546–569 (STSQDSSMLVQNDSATKDSLSSAS) are compositionally biased toward polar residues. 3 coiled-coil regions span residues 640-674 (EGTK…GEAS), 700-781 (ELEL…EENR), and 862-910 (LEDM…LEND). The RING-type zinc-finger motif lies at 1013 to 1048 (CKVCFESATAAVLLPCRHFCLCKPCSLACSECPLCR).

This sequence belongs to the TRAFAC class myosin-kinesin ATPase superfamily. Kinesin family. KIN-7 subfamily.

It is found in the plastid. The protein resides in the chloroplast. This Oryza sativa subsp. japonica (Rice) protein is Kinesin-like protein KIN-7K, chloroplastic.